The sequence spans 366 residues: GTP-binding protein 10 (366 aa).

The Obg domain maps to 13–148; it reads GNFIDNLRIF…RIVHLDLKVI (136 aa). Positions 149–344 constitute an OBG-type G domain; that stretch reads ADVGLVGFPN…LKSCIRKALD (196 aa). Residues 155–162, 202–206, and 278–281 contribute to the GTP site; these read GFPNAGKS, DLPGL, and NKMD. The segment covering 346–355 has biased composition (basic and acidic residues); that stretch reads QDGKESDAHR. A disordered region spans residues 346–366; sequence QDGKESDAHRSKQLLNLQSSS.

It belongs to the TRAFAC class OBG-HflX-like GTPase superfamily. OBG GTPase family.

It localises to the nucleus. The protein resides in the nucleolus. Functionally, may be involved in the ribosome maturation process. This chain is GTP-binding protein 10 (Gtpbp10), found in Mus musculus (Mouse).